The chain runs to 94 residues: Small ribosomal subunit protein uS19 (94 aa).

It belongs to the universal ribosomal protein uS19 family.

Protein S19 forms a complex with S13 that binds strongly to the 16S ribosomal RNA. In Endomicrobium trichonymphae, this protein is Small ribosomal subunit protein uS19.